A 243-amino-acid polypeptide reads, in one-letter code: Small ribosomal subunit protein uS3 (243 aa).

The KH type-2 domain occupies 38–106; the sequence is IRKYLNARLA…DIQINIFEVK (69 aa). The disordered stretch occupies residues 214 to 243; sequence PNFTQSKESGRGNNGGNNGGKNFKRKKNNR.

The protein belongs to the universal ribosomal protein uS3 family. In terms of assembly, part of the 30S ribosomal subunit. Forms a tight complex with proteins S10 and S14.

In terms of biological role, binds the lower part of the 30S subunit head. Binds mRNA in the 70S ribosome, positioning it for translation. The chain is Small ribosomal subunit protein uS3 from Bacteroides thetaiotaomicron (strain ATCC 29148 / DSM 2079 / JCM 5827 / CCUG 10774 / NCTC 10582 / VPI-5482 / E50).